We begin with the raw amino-acid sequence, 209 residues long: Ribonuclease HII (209 aa).

Residues 7-198 (GPVAGVDEAG…VAKAHQEWLH (192 aa)) enclose the RNase H type-2 domain. Asp13, Glu14, and Asp107 together coordinate a divalent metal cation.

It belongs to the RNase HII family. Mn(2+) serves as cofactor. It depends on Mg(2+) as a cofactor.

The protein resides in the cytoplasm. It catalyses the reaction Endonucleolytic cleavage to 5'-phosphomonoester.. In terms of biological role, endonuclease that specifically degrades the RNA of RNA-DNA hybrids. This is Ribonuclease HII from Corynebacterium glutamicum (strain R).